The chain runs to 212 residues: Large ribosomal subunit protein bL25 (212 aa).

The disordered stretch occupies residues 179-212 (EPEEEELPEDDEAAAEGEDAAAGEEAEAPAESED).

The protein belongs to the bacterial ribosomal protein bL25 family. CTC subfamily. As to quaternary structure, part of the 50S ribosomal subunit; part of the 5S rRNA/L5/L18/L25 subcomplex. Contacts the 5S rRNA. Binds to the 5S rRNA independently of L5 and L18.

Functionally, this is one of the proteins that binds to the 5S RNA in the ribosome where it forms part of the central protuberance. This Corynebacterium urealyticum (strain ATCC 43042 / DSM 7109) protein is Large ribosomal subunit protein bL25.